A 125-amino-acid polypeptide reads, in one-letter code: Snaclec alboaggregin-A subunit beta (125 aa).

The region spanning 1–125 (GFDCPFGWSS…TRYPVCKFXG (125 aa)) is the C-type lectin domain. Disulfide bonds link cysteine 4–cysteine 15, cysteine 32–cysteine 121, and cysteine 98–cysteine 113.

Belongs to the snaclec family. As to quaternary structure, heterotetramer of the subunits alpha, alpha', beta and beta'; disulfide-linked. As to expression, expressed by the venom gland.

It is found in the secreted. Functionally, potent platelet activator that aggregates platelets via both GPIbalpha (GP1BA) and GPVI (GP6). Induces a tyrosine phosphorylation profile in platelets that resembles this produced by collagen, involving the time dependent tyrosine phosphorylation of Fc receptor gamma chain (FCGR1A), phospholipase Cgamma2 (PLCG2), and LAT. This is Snaclec alboaggregin-A subunit beta from Trimeresurus albolabris (White-lipped pit viper).